We begin with the raw amino-acid sequence, 273 residues long: Formamidopyrimidine-DNA glycosylase (273 aa).

The Schiff-base intermediate with DNA role is filled by proline 2. Catalysis depends on glutamate 3, which acts as the Proton donor. Lysine 59 functions as the Proton donor; for beta-elimination activity in the catalytic mechanism. Residues histidine 92 and arginine 111 each contribute to the DNA site. The segment at lysine 239–lysine 273 adopts an FPG-type zinc-finger fold. Arginine 263 (proton donor; for delta-elimination activity) is an active-site residue.

It belongs to the FPG family. Monomer. Zn(2+) serves as cofactor.

It catalyses the reaction Hydrolysis of DNA containing ring-opened 7-methylguanine residues, releasing 2,6-diamino-4-hydroxy-5-(N-methyl)formamidopyrimidine.. The enzyme catalyses 2'-deoxyribonucleotide-(2'-deoxyribose 5'-phosphate)-2'-deoxyribonucleotide-DNA = a 3'-end 2'-deoxyribonucleotide-(2,3-dehydro-2,3-deoxyribose 5'-phosphate)-DNA + a 5'-end 5'-phospho-2'-deoxyribonucleoside-DNA + H(+). Its function is as follows. Involved in base excision repair of DNA damaged by oxidation or by mutagenic agents. Acts as a DNA glycosylase that recognizes and removes damaged bases. Has a preference for oxidized purines, such as 7,8-dihydro-8-oxoguanine (8-oxoG). Has AP (apurinic/apyrimidinic) lyase activity and introduces nicks in the DNA strand. Cleaves the DNA backbone by beta-delta elimination to generate a single-strand break at the site of the removed base with both 3'- and 5'-phosphates. The sequence is that of Formamidopyrimidine-DNA glycosylase from Listeria monocytogenes serovar 1/2a (strain ATCC BAA-679 / EGD-e).